The primary structure comprises 391 residues: Flagellin (391 aa).

The protein belongs to the bacterial flagellin family.

The protein localises to the secreted. The protein resides in the bacterial flagellum. Functionally, flagellin is the subunit protein which polymerizes to form the filaments of bacterial flagella. The chain is Flagellin (flaA) from Bordetella bronchiseptica (strain ATCC BAA-588 / NCTC 13252 / RB50) (Alcaligenes bronchisepticus).